A 115-amino-acid chain; its full sequence is NADH-ubiquinone oxidoreductase chain 3 (115 aa).

3 helical membrane passes run 1–21, 58–78, and 84–104; these read MMMLMTSITISFLLPMIVMLL, IAVIFLIFDVEIALILPIVII, and IMVWTLSTMLFIIILLVGLYY.

This sequence belongs to the complex I subunit 3 family.

The protein localises to the mitochondrion membrane. The catalysed reaction is a ubiquinone + NADH + 5 H(+)(in) = a ubiquinol + NAD(+) + 4 H(+)(out). Core subunit of the mitochondrial membrane respiratory chain NADH dehydrogenase (Complex I) that is believed to belong to the minimal assembly required for catalysis. Complex I functions in the transfer of electrons from NADH to the respiratory chain. The immediate electron acceptor for the enzyme is believed to be ubiquinone. The polypeptide is NADH-ubiquinone oxidoreductase chain 3 (ND3) (Locusta migratoria (Migratory locust)).